A 276-amino-acid chain; its full sequence is Small ribosomal subunit protein uS2 (276 aa).

2 disordered regions span residues 209 to 233 and 252 to 276; these read AQEA…AADV and VDWS…SSWE. Residues 211 to 231 show a composition bias toward low complexity; sequence EAAAAAQAAKETAEPTTEGAA.

This sequence belongs to the universal ribosomal protein uS2 family. Component of the small ribosomal subunit. Mature ribosomes consist of a small (40S) and a large (60S) subunit. The 40S subunit contains about 33 different proteins and 1 molecule of RNA (18S). The 60S subunit contains about 49 different proteins and 3 molecules of RNA (25S, 5.8S and 5S). Interacts with RPS21.

It is found in the cytoplasm. Required for the assembly and/or stability of the 40S ribosomal subunit. Required for the processing of the 20S rRNA-precursor to mature 18S rRNA in a late step of the maturation of 40S ribosomal subunits. The polypeptide is Small ribosomal subunit protein uS2 (Mycosarcoma maydis (Corn smut fungus)).